Reading from the N-terminus, the 165-residue chain is E3 ubiquitin-protein ligase RNF181 (165 aa).

The RING-type; atypical zinc-finger motif lies at 88-129 (CPVCLLEFEAEETVIEMPCHHLFHSNCILPWLSKTNSCPLCR). The tract at residues 136-165 (DDSYEEHKKDKARRQQQQHRLENLHGAMYT) is disordered. Phosphothreonine is present on Thr165.

It belongs to the RNF181 family. In terms of assembly, directly interacts with ITGA2B and, as a result, with integrin ITGA2B/ITGB3. There is no evidence that integrin ITGA2B/ITGB3 is an endogenous substrate for RNF181-directed ubiquitination. Auto-ubiquitinated as part of the enzymatic reaction.

It carries out the reaction S-ubiquitinyl-[E2 ubiquitin-conjugating enzyme]-L-cysteine + [acceptor protein]-L-lysine = [E2 ubiquitin-conjugating enzyme]-L-cysteine + N(6)-ubiquitinyl-[acceptor protein]-L-lysine.. It participates in protein modification; protein ubiquitination. Functionally, E3 ubiquitin-protein ligase which accepts ubiquitin from an E2 ubiquitin-conjugating enzyme in the form of a thioester and then directly transfers the ubiquitin to targeted substrates. Catalyzes monoubiquitination of 26S proteasome subunit PSMC2/RPT1. This chain is E3 ubiquitin-protein ligase RNF181, found in Mus musculus (Mouse).